A 207-amino-acid chain; its full sequence is Holliday junction branch migration complex subunit RuvA (207 aa).

Residues 1–65 (MIGRIRGVIL…EDAQLLYGFN (65 aa)) form a domain I region. The interval 66-143 (QKQERALFRE…KGLNGDLFEQ (78 aa)) is domain II. The flexible linker stretch occupies residues 144–158 (NGDIELPASASSKAP). A domain III region spans residues 159-207 (SAADIEAEASAALIALGYKPQEAAKMISRVATAGADSETLIKEALRAAI).

Belongs to the RuvA family. Homotetramer. Forms an RuvA(8)-RuvB(12)-Holliday junction (HJ) complex. HJ DNA is sandwiched between 2 RuvA tetramers; dsDNA enters through RuvA and exits via RuvB. An RuvB hexamer assembles on each DNA strand where it exits the tetramer. Each RuvB hexamer is contacted by two RuvA subunits (via domain III) on 2 adjacent RuvB subunits; this complex drives branch migration. In the full resolvosome a probable DNA-RuvA(4)-RuvB(12)-RuvC(2) complex forms which resolves the HJ.

The protein localises to the cytoplasm. Its function is as follows. The RuvA-RuvB-RuvC complex processes Holliday junction (HJ) DNA during genetic recombination and DNA repair, while the RuvA-RuvB complex plays an important role in the rescue of blocked DNA replication forks via replication fork reversal (RFR). RuvA specifically binds to HJ cruciform DNA, conferring on it an open structure. The RuvB hexamer acts as an ATP-dependent pump, pulling dsDNA into and through the RuvAB complex. HJ branch migration allows RuvC to scan DNA until it finds its consensus sequence, where it cleaves and resolves the cruciform DNA. This is Holliday junction branch migration complex subunit RuvA from Proteus mirabilis (strain HI4320).